The following is a 689-amino-acid chain: DNA ligase (689 aa).

NAD(+) is bound by residues 40–44 (DAEYD), 89–90 (SL), and glutamate 121. Lysine 123 (N6-AMP-lysine intermediate) is an active-site residue. The NAD(+) site is built by arginine 144, glutamate 179, lysine 295, and lysine 319. Zn(2+)-binding residues include cysteine 413, cysteine 416, cysteine 431, and cysteine 437. Positions 610 to 689 (KEHSSLTGKI…EEWLTIVNNV (80 aa)) constitute a BRCT domain.

It belongs to the NAD-dependent DNA ligase family. LigA subfamily. It depends on Mg(2+) as a cofactor. Mn(2+) is required as a cofactor.

It carries out the reaction NAD(+) + (deoxyribonucleotide)n-3'-hydroxyl + 5'-phospho-(deoxyribonucleotide)m = (deoxyribonucleotide)n+m + AMP + beta-nicotinamide D-nucleotide.. Functionally, DNA ligase that catalyzes the formation of phosphodiester linkages between 5'-phosphoryl and 3'-hydroxyl groups in double-stranded DNA using NAD as a coenzyme and as the energy source for the reaction. It is essential for DNA replication and repair of damaged DNA. The chain is DNA ligase from Rickettsia canadensis (strain McKiel).